The following is a 738-amino-acid chain: Dipeptidyl peptidase 3 (738 aa).

Ala2 bears the N-acetylalanine mark. His450 lines the Zn(2+) pocket. Glu451 is a catalytic residue. 2 residues coordinate Zn(2+): His455 and Glu508.

Belongs to the peptidase M49 family. The cofactor is Zn(2+).

It localises to the cytoplasm. The protein localises to the cytosol. The catalysed reaction is Release of an N-terminal dipeptide from a peptide comprising four or more residues, with broad specificity. Also acts on dipeptidyl 2-naphthylamides.. Its function is as follows. Cleaves and degrades bioactive peptides, including angiotensin, Leu-enkephalin and Met-enkephalin. Also cleaves Arg-Arg-beta-naphthylamide (in vitro). The sequence is that of Dipeptidyl peptidase 3 (Dpp3) from Mus musculus (Mouse).